A 139-amino-acid chain; its full sequence is Cuticle protein 76 (139 aa).

A run of 6 repeats spans residues 7–10 (AAPA), 68–71 (AAPA), 75–78 (AAPV), 93–95 (AAP), 105–108 (AAPA), and 121–124 (AAPA).

Its function is as follows. Component of the cuticle of migratory locust which contains more than 100 different structural proteins. This is Cuticle protein 76 from Locusta migratoria (Migratory locust).